Consider the following 599-residue polypeptide: Putative sensor histidine kinase NtrY-like (599 aa).

Transmembrane regions (helical) follow at residues Val-17–Ile-37, Phe-44–Leu-64, Ile-85–Val-105, and Ile-285–Phe-305. In terms of domain architecture, HAMP spans Ala-307–Arg-361. The Histidine kinase domain maps to Lys-378–Lys-589. His-381 is modified (phosphohistidine; by autocatalysis).

The protein localises to the cell membrane. It catalyses the reaction ATP + protein L-histidine = ADP + protein N-phospho-L-histidine.. Functionally, member of the two-component regulatory system RF_0427/RF_0895. This Rickettsia felis (strain ATCC VR-1525 / URRWXCal2) (Rickettsia azadi) protein is Putative sensor histidine kinase NtrY-like.